A 470-amino-acid polypeptide reads, in one-letter code: 1-aminocyclopropane-1-carboxylate synthase 9 (470 aa).

The substrate site is built by E47 and Y85. Residue K272 is modified to N6-(pyridoxal phosphate)lysine.

It belongs to the class-I pyridoxal-phosphate-dependent aminotransferase family. As to quaternary structure, homodimer and heterodimer. In vivo, the relevance of heterodimerization with other ACS enzymes is however unsure. Interacts (via its C-terminal region) with FEI1, FEI2, ETO1 and EOL1. It depends on pyridoxal 5'-phosphate as a cofactor. Post-translationally, may be processed at its C-terminus. Expressed in roots and siliques.

It catalyses the reaction S-adenosyl-L-methionine = 1-aminocyclopropane-1-carboxylate + S-methyl-5'-thioadenosine + H(+). It participates in alkene biosynthesis; ethylene biosynthesis via S-adenosyl-L-methionine; ethylene from S-adenosyl-L-methionine: step 1/2. In terms of biological role, 1-aminocyclopropane-1-carboxylate synthase (ACS) enzymes catalyze the conversion of S-adenosyl-L-methionine (SAM) into 1-aminocyclopropane-1-carboxylate (ACC), a direct precursor of ethylene. The sequence is that of 1-aminocyclopropane-1-carboxylate synthase 9 (ACS9) from Arabidopsis thaliana (Mouse-ear cress).